The primary structure comprises 308 residues: Probable 5-dehydro-4-deoxyglucarate dehydratase (308 aa).

The protein belongs to the DapA family.

The enzyme catalyses 5-dehydro-4-deoxy-D-glucarate + H(+) = 2,5-dioxopentanoate + CO2 + H2O. It functions in the pathway carbohydrate acid metabolism; D-glucarate degradation; 2,5-dioxopentanoate from D-glucarate: step 2/2. The polypeptide is Probable 5-dehydro-4-deoxyglucarate dehydratase (ycbC) (Bacillus subtilis (strain 168)).